We begin with the raw amino-acid sequence, 121 residues long: Small ribosomal subunit protein uS13 (121 aa).

Positions histidine 91 to lysine 121 are disordered. The segment covering alanine 106 to lysine 121 has biased composition (basic residues).

Belongs to the universal ribosomal protein uS13 family. In terms of assembly, part of the 30S ribosomal subunit. Forms a loose heterodimer with protein S19. Forms two bridges to the 50S subunit in the 70S ribosome.

In terms of biological role, located at the top of the head of the 30S subunit, it contacts several helices of the 16S rRNA. In the 70S ribosome it contacts the 23S rRNA (bridge B1a) and protein L5 of the 50S subunit (bridge B1b), connecting the 2 subunits; these bridges are implicated in subunit movement. Contacts the tRNAs in the A and P-sites. In Bacillus cereus (strain G9842), this protein is Small ribosomal subunit protein uS13.